A 230-amino-acid chain; its full sequence is Large ribosomal subunit protein uL1 (230 aa).

The protein belongs to the universal ribosomal protein uL1 family. Part of the 50S ribosomal subunit.

In terms of biological role, binds directly to 23S rRNA. The L1 stalk is quite mobile in the ribosome, and is involved in E site tRNA release. Its function is as follows. Protein L1 is also a translational repressor protein, it controls the translation of the L11 operon by binding to its mRNA. In Lactobacillus acidophilus (strain ATCC 700396 / NCK56 / N2 / NCFM), this protein is Large ribosomal subunit protein uL1.